Consider the following 186-residue polypeptide: Heat shock protein 23 (186 aa).

The sHSP domain maps to 53–161 (VGASSGSSGA…KGNERIVQIQ (109 aa)). Positions 163–186 (VGPAHLNVKENPKEAVEQDNGNDK) are disordered. Positions 169–186 (NVKENPKEAVEQDNGNDK) are enriched in basic and acidic residues.

Belongs to the small heat shock protein (HSP20) family.

This chain is Heat shock protein 23 (Hsp23), found in Drosophila melanogaster (Fruit fly).